A 643-amino-acid polypeptide reads, in one-letter code: MKSTKMTTAQALVKFLDNQYVSFDGKEEKFVHGIFTIFGHGIVVGLGQALDENPRGLKVYQGRNEQGMAHAATAFAKQNNRRKIIACSSSIGPGAANMVTAAATATVNNIPLLLLPGDSFATRQPDPVLQQIEQSYNLGITTNDVFKPVCKYWDRVNRPEQLMSAMINAMRVLTDPAETGAVCIALPQDVQGESFEFPEYFFKKRVHKITRPLAVEEEFYECLNIIKNKKKPIIICGGGVRYSEAGDTLSKFANRFNIPIGETQAGKSSIKSSDLMNLGGIGVTGNLAANIIAKDADLVIGVGTRFSDFTTASKSLFENPDVEFVTINLSKFHASKLDSCKMVGDVKECLEYLYKLLEKENYISSYKDEIKDAKMAWKEEMKKLTNIKYEENFDPIIKFRNKESLEEFKKLTDTTITQTSALGLIRECIDNDAIIVGASGSLPGDLQRMWETESLNSYHMEYGYSCMGYEIAAGFGAKLAEPEKEVYSILGDGSYLMLHSELITSIQENKKVNVLLFDNCGFGCINNLQMSNGIGNLATEFRYRNDETNKLNGKLIPIDFAKAAAGYGLKTYTAKNLEELKNALIDAKKQRVSTLIDIKVLPKTMTDGYESWWHVGLAEVSEKESVNKAFENNKKVLKSARKY.

Glu-65 serves as a coordination point for thiamine diphosphate. A thiamine pyrophosphate binding region spans residues 441 to 521 (SLPGDLQRMW…VNVLLFDNCG (81 aa)). Positions 492 and 519 each coordinate Mg(2+).

This sequence belongs to the TPP enzyme family. Mg(2+) serves as cofactor. It depends on thiamine diphosphate as a cofactor.

The enzyme catalyses 3D-3,5/4-trihydroxycyclohexane-1,2-dione + H2O = 5-deoxy-D-glucuronate + H(+). The protein operates within polyol metabolism; myo-inositol degradation into acetyl-CoA; acetyl-CoA from myo-inositol: step 3/7. In terms of biological role, involved in the cleavage of the C1-C2 bond of 3D-(3,5/4)-trihydroxycyclohexane-1,2-dione (THcHDO) to yield 5-deoxy-glucuronate (5DG). This is 3D-(3,5/4)-trihydroxycyclohexane-1,2-dione hydrolase from Clostridium botulinum (strain Eklund 17B / Type B).